The following is a 3797-amino-acid chain: A-kinase anchor protein 9 (3797 aa).

Residues 1–140 (MEDEERQRKL…SSEQGAQSSQ (140 aa)) form a disordered region. Composition is skewed to polar residues over residues 50 to 65 (HTDQ…SSQR) and 92 to 108 (EIST…NGCN). Basic and acidic residues predominate over residues 115–124 (KPTDPLREEE). Ser-139 carries the post-translational modification Phosphoserine. Coiled coils occupy residues 140–607 (QTCL…LRTQ) and 640–976 (IHYK…LLAN). The residue at position 1288 (Ser-1288) is a Phosphoserine. 3 disordered regions span residues 1643–1668 (STQT…LERS), 2323–2343 (VVST…EESF), and 2419–2454 (SDNL…ASRT). Composition is skewed to basic and acidic residues over residues 1648 to 1668 (DGHD…LERS) and 2328 to 2343 (QQRE…EESF). The stretch at 1808-2377 (SRLQAAVEKL…MTHMNNVLKE (570 aa)) forms a coiled coil. Over residues 2438-2454 (KQTSLTRLQESPEASRT) the composition is skewed to polar residues. The interval 2498-2510 (DLQRSLEKFAAAL) is PKA-RII subunit binding domain. Disordered regions lie at residues 2604–2695 (LEEA…SSSG) and 3271–3296 (MEKD…QKKM). Acidic residues predominate over residues 2606–2615 (EAEERPEEGG). Over residues 2642–2669 (PLTEAKEKLSYSLEKEKRTGEQESREAP) the composition is skewed to basic and acidic residues. The stretch at 2975–3325 (LQKADRRSLL…QVYKLDLEGK (351 aa)) forms a coiled coil. The span at 3279–3294 (QKTLQTEQEANTQGQK) shows a compositional bias: polar residues. Phosphoserine is present on residues Ser-3732, Ser-3755, and Ser-3787.

As to quaternary structure, interacts with the regulatory region of protein kinase N (PKN), protein phosphatase 2A (PP2A), protein phosphatase 1 (PP1) and the immature non-phosphorylated form of PKC epsilon. Interacts with CIP4 and FNBP1. Interacts with chloride intracellular channel proteins CLIC1, CLIC4 and CLIC5. CSNK1D binding promotes its centrosomal subcellular location. Interacts with GM130/GOLGA2; leading to recruitment to the Golgi apparatus. Interacts with KCNQ1; targets protein kinase A (PKA) catalytic and regulatory subunits and protein phosphatase 1 (PP1), to the heterodimer KCNQ1-KCNE1. Interacts with PDE4DIP isoform 2; this interaction stabilizes both proteins. In complex with PDE4DIP isoform 2, recruits CAMSAP2 to the Golgi apparatus. Forms a pericentrosomal complex with CDK5RAP2, EB1/MAPRE1 and PDE4DIP isoform 2; within this complex, MAPRE1 binding to CDK5RAP2 may be mediated by PDE4DIP. Interacts with MAPRE1 and MAPRE3. Interacts (via C-terminus) with CAMSAP2; this interaction is much stronger in the presence of PDE4DIP isoform 2. Interacts with CAMSAP3. Interacts (via C-terminus) with the gamma-tubulin ring complex (gamma-TuRC), composed of gamma-tubulin, TUBGCP2, TUBGCP3, TUBGCP4, TUBGCP5 and TUBGCP6.

It localises to the golgi apparatus. The protein localises to the cytoplasm. The protein resides in the cytoskeleton. It is found in the microtubule organizing center. Its subcellular location is the centrosome. In terms of biological role, scaffolding protein that assembles several protein kinases and phosphatases on the centrosome and Golgi apparatus. Required to maintain the integrity of the Golgi apparatus. Required for microtubule nucleation at the cis-side of the Golgi apparatus. Required for association of the centrosomes with the poles of the bipolar mitotic spindle during metaphase. In complex with PDE4DIP isoform 2/MMG8/SMYLE, recruits CAMSAP2 to the Golgi apparatus and tethers non-centrosomal minus-end microtubules to the Golgi, an important step for polarized cell movement. In complex with PDE4DIP isoform 2, EB1/MAPRE1 and CDK5RAP2, contributes to microtubules nucleation and extension also from the centrosome to the cell periphery. The chain is A-kinase anchor protein 9 (Akap9) from Mus musculus (Mouse).